The chain runs to 206 residues: ATP-dependent dethiobiotin synthetase BioD (206 aa).

Position 12-17 (12-17) interacts with ATP; sequence DSGKTL. Residue Thr-16 coordinates Mg(2+). Lys-32 is an active-site residue. Glu-99 provides a ligand contact to Mg(2+). Residue 99–102 participates in ATP binding; the sequence is EGAG.

The protein belongs to the dethiobiotin synthetase family. In terms of assembly, homodimer. Requires Mg(2+) as cofactor.

Its subcellular location is the cytoplasm. The catalysed reaction is (7R,8S)-7,8-diammoniononanoate + CO2 + ATP = (4R,5S)-dethiobiotin + ADP + phosphate + 3 H(+). It participates in cofactor biosynthesis; biotin biosynthesis; biotin from 7,8-diaminononanoate: step 1/2. Its function is as follows. Catalyzes a mechanistically unusual reaction, the ATP-dependent insertion of CO2 between the N7 and N8 nitrogen atoms of 7,8-diaminopelargonic acid (DAPA, also called 7,8-diammoniononanoate) to form a ureido ring. The polypeptide is ATP-dependent dethiobiotin synthetase BioD (Cytophaga hutchinsonii (strain ATCC 33406 / DSM 1761 / CIP 103989 / NBRC 15051 / NCIMB 9469 / D465)).